Reading from the N-terminus, the 141-residue chain is Nucleoside diphosphate kinase (141 aa).

Lysine 11, phenylalanine 59, arginine 87, threonine 93, arginine 104, and asparagine 114 together coordinate ATP. Histidine 117 serves as the catalytic Pros-phosphohistidine intermediate.

It belongs to the NDK family. In terms of assembly, homotetramer. Requires Mg(2+) as cofactor.

It localises to the cytoplasm. The catalysed reaction is a 2'-deoxyribonucleoside 5'-diphosphate + ATP = a 2'-deoxyribonucleoside 5'-triphosphate + ADP. It carries out the reaction a ribonucleoside 5'-diphosphate + ATP = a ribonucleoside 5'-triphosphate + ADP. Its function is as follows. Major role in the synthesis of nucleoside triphosphates other than ATP. The ATP gamma phosphate is transferred to the NDP beta phosphate via a ping-pong mechanism, using a phosphorylated active-site intermediate. This Cellvibrio japonicus (strain Ueda107) (Pseudomonas fluorescens subsp. cellulosa) protein is Nucleoside diphosphate kinase.